The chain runs to 243 residues: Pyridoxine 5'-phosphate synthase (243 aa).

Residue asparagine 9 coordinates 3-amino-2-oxopropyl phosphate. Residue 11-12 (DH) participates in 1-deoxy-D-xylulose 5-phosphate binding. Arginine 20 provides a ligand contact to 3-amino-2-oxopropyl phosphate. The Proton acceptor role is filled by histidine 45. 1-deoxy-D-xylulose 5-phosphate-binding residues include arginine 47 and histidine 52. Glutamate 72 (proton acceptor) is an active-site residue. 1-deoxy-D-xylulose 5-phosphate is bound at residue threonine 102. Catalysis depends on histidine 193, which acts as the Proton donor. Residues glycine 194 and 215-216 (GH) contribute to the 3-amino-2-oxopropyl phosphate site.

It belongs to the PNP synthase family. In terms of assembly, homooctamer; tetramer of dimers.

It is found in the cytoplasm. It catalyses the reaction 3-amino-2-oxopropyl phosphate + 1-deoxy-D-xylulose 5-phosphate = pyridoxine 5'-phosphate + phosphate + 2 H2O + H(+). It participates in cofactor biosynthesis; pyridoxine 5'-phosphate biosynthesis; pyridoxine 5'-phosphate from D-erythrose 4-phosphate: step 5/5. Its function is as follows. Catalyzes the complicated ring closure reaction between the two acyclic compounds 1-deoxy-D-xylulose-5-phosphate (DXP) and 3-amino-2-oxopropyl phosphate (1-amino-acetone-3-phosphate or AAP) to form pyridoxine 5'-phosphate (PNP) and inorganic phosphate. In Vibrio vulnificus (strain CMCP6), this protein is Pyridoxine 5'-phosphate synthase.